A 299-amino-acid chain; its full sequence is Protease HtpX homolog (299 aa).

2 helical membrane-spanning segments follow: residues 15–35 (ILLL…GYLF) and 39–59 (GLGG…SMIF). Residue His-143 participates in Zn(2+) binding. Glu-144 is a catalytic residue. His-147 contacts Zn(2+). 2 consecutive transmembrane segments (helical) span residues 158–178 (IAVA…RMMW) and 198–218 (IIML…ATLV). Glu-227 contacts Zn(2+).

It belongs to the peptidase M48B family. The cofactor is Zn(2+).

The protein resides in the cell membrane. This chain is Protease HtpX homolog, found in Streptococcus pneumoniae (strain P1031).